The following is a 128-amino-acid chain: MRFALTVTGPAYGTQQASSAWQFAQAVLQEGHELACVFFYREGVLNANQLTAPASDEFDLVRAWQSLHDEQGVALHICVAAALRRGVTDEREAQQLALASHNLQPGFTLSGLGALAEAALTCDRMVQF.

Catalysis depends on C78, which acts as the Cysteine persulfide intermediate.

Belongs to the DsrE/TusD family. As to quaternary structure, heterohexamer, formed by a dimer of trimers. The hexameric TusBCD complex contains 2 copies each of TusB, TusC and TusD. The TusBCD complex interacts with TusE.

The protein resides in the cytoplasm. In terms of biological role, part of a sulfur-relay system required for 2-thiolation of 5-methylaminomethyl-2-thiouridine (mnm(5)s(2)U) at tRNA wobble positions. Accepts sulfur from TusA and transfers it in turn to TusE. The protein is Sulfurtransferase TusD of Klebsiella pneumoniae (strain 342).